The following is a 584-amino-acid chain: Interferon regulatory factor 2-binding protein 1 (584 aa).

The interval His59–Arg120 is disordered. Phosphoserine is present on Ser66. Residues Ser82–Ser100 are compositionally biased toward low complexity. Ser125 carries the phosphoserine modification. Position 177 is an omega-N-methylarginine (Arg177). Ser186 is modified (phosphoserine). A coiled-coil region spans residues Glu197–Gly217. Residue Lys227 forms a Glycyl lysine isopeptide (Lys-Gly) (interchain with G-Cter in SUMO2) linkage. Disordered stretches follow at residues Pro346–Ser421 and Leu433–Ala495. The segment covering Tyr354–Ala369 has biased composition (pro residues). A phosphoserine mark is found at Ser371, Ser384, Ser421, and Ser436. A Glycyl lysine isopeptide (Lys-Gly) (interchain with G-Cter in SUMO2) cross-link involves residue Lys438. The span at Ala449–Ser458 shows a compositional bias: low complexity. Residues Ser453 and Ser457 each carry the phosphoserine modification. The RING-type; degenerate zinc finger occupies Cys503–Asp550. The tract at residues Cys503–Asp550 is cys-rich.

The protein belongs to the IRF2BP family. Interacts with IRF2. Part of a corepressor complex containing IRF2 and IRF2BP2. Interacts with JDP2.

The protein localises to the nucleus. The catalysed reaction is S-ubiquitinyl-[E2 ubiquitin-conjugating enzyme]-L-cysteine + [acceptor protein]-L-lysine = [E2 ubiquitin-conjugating enzyme]-L-cysteine + N(6)-ubiquitinyl-[acceptor protein]-L-lysine.. Acts as a transcriptional corepressor in a IRF2-dependent manner; this repression is not mediated by histone deacetylase activities. May act as an E3 ligase towards JDP2, enhancing its polyubiquitination. Represses ATF2-dependent transcriptional activation. This chain is Interferon regulatory factor 2-binding protein 1 (Irf2bp1), found in Mus musculus (Mouse).